The sequence spans 287 residues: ATP synthase gamma chain (287 aa).

It belongs to the ATPase gamma chain family. As to quaternary structure, F-type ATPases have 2 components, CF(1) - the catalytic core - and CF(0) - the membrane proton channel. CF(1) has five subunits: alpha(3), beta(3), gamma(1), delta(1), epsilon(1). CF(0) has three main subunits: a, b and c.

It is found in the cell inner membrane. Its function is as follows. Produces ATP from ADP in the presence of a proton gradient across the membrane. The gamma chain is believed to be important in regulating ATPase activity and the flow of protons through the CF(0) complex. The chain is ATP synthase gamma chain from Azotobacter vinelandii (strain DJ / ATCC BAA-1303).